A 1887-amino-acid polypeptide reads, in one-letter code: DNA-directed RNA polymerase II subunit RPB1 (1887 aa).

Residues cysteine 67, cysteine 70, cysteine 77, histidine 80, cysteine 107, cysteine 110, cysteine 150, and cysteine 176 each contribute to the Zn(2+) site. The disordered stretch occupies residues 156–178 (MDLTKENQQPDPNKKPGHGGCGH). Residues aspartate 487, aspartate 489, and aspartate 491 each coordinate Mg(2+). Positions 825-837 (PSEFYFHAMGGRE) are bridging helix. Residue lysine 1260 forms a Glycyl lysine isopeptide (Lys-Gly) (interchain with G-Cter in ubiquitin) linkage. 2 disordered regions span residues 1528-1565 (TPGGPSFSPSAASDASGMSPSWSPAHPGSSPSSPGPSM) and 1579-1887 (YSPT…ESED). Composition is skewed to low complexity over residues 1529 to 1565 (PGGPSFSPSAASDASGMSPSWSPAHPGSSPSSPGPSM), 1579 to 1610 (YSPTSPNYTASSPGGASPNYSPSSPNYSPTSP), and 1626 to 1650 (PQSTGYSPSSSGYSPTSPVYSPTVQ). Copy 1 of the repeat occupies 1579-1585 (YSPTSPN). The interval 1579 to 1881 (YSPTSPNYTA…SPAYSPSSPT (303 aa)) is C-terminal domain (CTD); 32 X 7 AA approximate tandem repeats of Y-[ST]-P-[STNVAPGN]-[STGMA]-[PSTR]-[SNAGCQKTLRIMH]. One copy of the 2; approximate repeat lies at 1586-1592 (YTASSPG). A run of 4 repeats spans residues 1598–1604 (YSPSSPN), 1605–1611 (YSPTSPL), 1631–1637 (YSPSSSG), and 1638–1644 (YSPTSPV). Polar residues predominate over residues 1651–1664 (FQSSPSFAGSGSNI). The span at 1665–1760 (YSPGNAYSPS…GVKYSPTSPT (96 aa)) shows a compositional bias: low complexity. Repeat copies occupy residues 1671-1677 (YSPSSSN), 1678-1684 (YSPNSPS), 1685-1691 (YSPTSPS), 1692-1698 (YSPSSPS), 1699-1705 (YSPTSPC), 1706-1712 (YSPTSPS), 1713-1719 (YSPTSPN), 1720-1726 (YTPVTPS), 1727-1733 (YSPTSPN), 1740-1746 (YSPASPA), 1754-1760 (YSPTSPT), 1761-1767 (YSPPSPS), 1777-1783 (YTPGSPQ), 1784-1790 (YSPASPK), 1791-1797 (YSPTSPL), 1798-1804 (YSPSSPQ), and 1811-1817 (YSPTGST). Positions 1776–1786 (QYTPGSPQYSP) are enriched in polar residues. The segment covering 1788–1813 (SPKYSPTSPLYSPSSPQHSPSNQYSP) has biased composition (low complexity). Residues 1814–1831 (TGSTYSATSPRYSPNMSI) show a composition bias toward polar residues. A 24; approximate repeat occupies 1818-1824 (YSATSPR). 8 consecutive repeat copies span residues 1825 to 1831 (YSPNMSI), 1832 to 1838 (YSPSSTK), 1839 to 1845 (YSPTSPT), 1846 to 1852 (YTPTARN), 1853 to 1859 (YSPTSPM), 1860 to 1866 (YSPTAPS), 1868 to 1874 (YSPTSPA), and 1875 to 1881 (YSPSSPT). Residues 1832–1849 (YSPSSTKYSPTSPTYTPT) show a composition bias toward low complexity. A compositionally biased stretch (polar residues) spans 1850–1859 (ARNYSPTSPM). A compositionally biased stretch (low complexity) spans 1860–1881 (YSPTAPSHYSPTSPAYSPSSPT).

Belongs to the RNA polymerase beta' chain family. Component of the RNA polymerase II (Pol II) complex consisting of 12 subunits. Post-translationally, the tandem 7 residues repeats in the C-terminal domain (CTD) can be highly phosphorylated. The phosphorylation activates Pol II. Phosphorylation occurs mainly at residues 'Ser-2' and 'Ser-5' of the heptapeptide repeat. The phosphorylation state is believed to result from the balanced action of site-specific CTD kinases and phosphatase, and a 'CTD code' that specifies the position of Pol II within the transcription cycle has been proposed. In terms of processing, following transcription stress, the elongating form of RNA polymerase II (RNA pol IIo) is polyubiquitinated via 'Lys-63'-linkages on Lys-1260 at DNA damage sites without leading to degradation: ubiquitination promotes RNA pol IIo backtracking to allow access by the transcription-coupled nucleotide excision repair (TC-NER) machinery. Subsequent DEF1-dependent polyubiquitination by the elongin complex via 'Lys-48'-linkages may lead to proteasome-mediated degradation; presumably at stalled RNA pol II where TC-NER has failed, to halt global transcription and enable 'last resort' DNA repair pathways.

It is found in the nucleus. The enzyme catalyses RNA(n) + a ribonucleoside 5'-triphosphate = RNA(n+1) + diphosphate. Functionally, DNA-dependent RNA polymerase catalyzes the transcription of DNA into RNA using the four ribonucleoside triphosphates as substrates. Largest and catalytic component of RNA polymerase II which synthesizes mRNA precursors and many functional non-coding RNAs. Forms the polymerase active center together with the second largest subunit. Pol II is the central component of the basal RNA polymerase II transcription machinery. It is composed of mobile elements that move relative to each other. RPB1 is part of the core element with the central large cleft, the clamp element that moves to open and close the cleft and the jaws that are thought to grab the incoming DNA template. At the start of transcription, a single-stranded DNA template strand of the promoter is positioned within the central active site cleft of Pol II. A bridging helix emanates from RPB1 and crosses the cleft near the catalytic site and is thought to promote translocation of Pol II by acting as a ratchet that moves the RNA-DNA hybrid through the active site by switching from straight to bent conformations at each step of nucleotide addition. During transcription elongation, Pol II moves on the template as the transcript elongates. Elongation is influenced by the phosphorylation status of the C-terminal domain (CTD) of Pol II largest subunit (RPB1), which serves as a platform for assembly of factors that regulate transcription initiation, elongation, termination and mRNA processing. The chain is DNA-directed RNA polymerase II subunit RPB1 from Drosophila melanogaster (Fruit fly).